The primary structure comprises 72 residues: Brevinin-2GHc (72 aa).

The N-terminal stretch at 1 to 22 (MFTMKKSLLLLFFLGMISLSLC) is a signal peptide. The propeptide occupies 23–42 (EQERGADEDEGEVEEQIKRS). The cysteines at positions 64 and 70 are disulfide-linked.

In terms of tissue distribution, expressed by the skin glands.

It is found in the secreted. Functionally, antimicrobial peptide. Active against the Gram-positive bacteria S.aureus FDA209P (MIC=9.8 ug/ml) and B.subtilis ATCC 6633 (MIC&gt;64 ug/ml), and the Gram-negative bacteria E.coli O111 (MIC=19.6 ug/ml) and E.coli ATCC 25922 (MIC=9.8 ug/ml). Not active against the fungus C.albicans. This Sylvirana guentheri (Gunther's frog) protein is Brevinin-2GHc.